We begin with the raw amino-acid sequence, 554 residues long: 3-(3-hydroxy-phenyl)propionate/3-hydroxycinnamic acid hydroxylase (554 aa).

Residues 17–46 (QVAIAGAGPVGLMMANYLGQMGIDVLVVEK) and 285–295 (FRIDRVLLAGD) each bind FAD.

This sequence belongs to the PheA/TfdB FAD monooxygenase family. Requires FAD as cofactor.

The catalysed reaction is 3-(3-hydroxyphenyl)propanoate + NADH + O2 + H(+) = 3-(2,3-dihydroxyphenyl)propanoate + NAD(+) + H2O. The enzyme catalyses (2E)-3-(3-hydroxyphenyl)prop-2-enoate + NADH + O2 + H(+) = (2E)-3-(2,3-dihydroxyphenyl)prop-2-enoate + NAD(+) + H2O. It functions in the pathway aromatic compound metabolism; 3-phenylpropanoate degradation. Functionally, catalyzes the insertion of one atom of molecular oxygen into position 2 of the phenyl ring of 3-(3-hydroxyphenyl)propionate (3-HPP) and hydroxycinnamic acid (3HCI). In Escherichia coli O139:H28 (strain E24377A / ETEC), this protein is 3-(3-hydroxy-phenyl)propionate/3-hydroxycinnamic acid hydroxylase.